Consider the following 114-residue polypeptide: C-X-C motif chemokine 5 (114 aa).

The first 36 residues, 1-36, serve as a signal peptide directing secretion; it reads MSLLSSRAARVPGPSSSLCALLVLLLLLTQPGPIAS. Cystine bridges form between cysteine 49/cysteine 75 and cysteine 51/cysteine 91.

This sequence belongs to the intercrine alpha (chemokine CxC) family. In terms of assembly, monomer. Homodimer. In terms of processing, N-terminal processed forms ENA-78(8-78) and ENA-78(9-78) are produced by proteolytic cleavage after secretion from peripheral blood monocytes.

Its subcellular location is the secreted. Its function is as follows. Involved in neutrophil activation. In vitro, ENA-78(8-78) and ENA-78(9-78) show a threefold higher chemotactic activity for neutrophil granulocytes. The chain is C-X-C motif chemokine 5 (CXCL5) from Homo sapiens (Human).